A 309-amino-acid chain; its full sequence is Pantothenate synthetase (309 aa).

Thr2 is modified (N-acetylthreonine). Position 40-47 (40-47 (MGALHEGH)) interacts with ATP. The active-site Proton donor is the His47. Residue Gln72 participates in (R)-pantoate binding. Residue Gln72 coordinates beta-alanine. The Mg(2+) site is built by Asp88, Asp89, and Gln92. 158 to 161 (GEKD) serves as a coordination point for ATP. Gln164 serves as a coordination point for (R)-pantoate. ATP contacts are provided by residues Val187 and 195–198 (MSSR).

It belongs to the pantothenate synthetase family.

It is found in the cytoplasm. It carries out the reaction (R)-pantoate + beta-alanine + ATP = (R)-pantothenate + AMP + diphosphate + H(+). It participates in cofactor biosynthesis; (R)-pantothenate biosynthesis; (R)-pantothenate from (R)-pantoate and beta-alanine: step 1/1. With respect to regulation, pantothenate exhibits uncompetitive inhibition toward both D-pantoate and ATP, and non-competitive inhibition toward beta-alanine. AMPCPP exhibits competitive inhibition toward ATP, uncompetitive inhibition toward beta-alanine, and non-competitive inhibition toward D-pantoate. The enzyme is most active in the presence of magnesium or manganese. Other divalent cations (cobalt, nickel, zinc) are less effective. Its function is as follows. Catalyzes the condensation of pantoate with beta-alanine in an ATP-dependent reaction via a pantoyl-adenylate intermediate. The sequence is that of Pantothenate synthetase (panC) from Mycobacterium tuberculosis (strain ATCC 25618 / H37Rv).